Consider the following 957-residue polypeptide: Glycine dehydrogenase (decarboxylating) (957 aa).

An N6-(pyridoxal phosphate)lysine modification is found at K708.

It belongs to the GcvP family. As to quaternary structure, the glycine cleavage system is composed of four proteins: P, T, L and H. Pyridoxal 5'-phosphate serves as cofactor.

It carries out the reaction N(6)-[(R)-lipoyl]-L-lysyl-[glycine-cleavage complex H protein] + glycine + H(+) = N(6)-[(R)-S(8)-aminomethyldihydrolipoyl]-L-lysyl-[glycine-cleavage complex H protein] + CO2. In terms of biological role, the glycine cleavage system catalyzes the degradation of glycine. The P protein binds the alpha-amino group of glycine through its pyridoxal phosphate cofactor; CO(2) is released and the remaining methylamine moiety is then transferred to the lipoamide cofactor of the H protein. The chain is Glycine dehydrogenase (decarboxylating) from Salmonella typhimurium (strain LT2 / SGSC1412 / ATCC 700720).